The primary structure comprises 274 residues: MTEARRSVYFISDRTGITAEALGHSLLTQFSIDFEQRTIPFVDTEEKAAQVVEQLNVASQRSGLRPIVFSTVVDAEVRRVLQTTDAVLFDFFDTFIAPLEQELRMPSSHVIGRSHGVVDNNMYDVRIDAMNYALNHDDGAVTHHYSRADVILTAVSRSGKTPTCIYLALQYGIYAANYPLTQDDLNRGKLPRKLVEHKRKLYGLTINVDRLQTIRSGRLPNSDYASLRQCSYEVARAEALFRSEGIPYVNTTTMSIEEIATKIIHEAKLERRLY.

154–161 (AVSRSGKT) contacts ADP.

Belongs to the pyruvate, phosphate/water dikinase regulatory protein family. PSRP subfamily.

The enzyme catalyses [pyruvate, water dikinase] + ADP = [pyruvate, water dikinase]-phosphate + AMP + H(+). It carries out the reaction [pyruvate, water dikinase]-phosphate + phosphate + H(+) = [pyruvate, water dikinase] + diphosphate. In terms of biological role, bifunctional serine/threonine kinase and phosphorylase involved in the regulation of the phosphoenolpyruvate synthase (PEPS) by catalyzing its phosphorylation/dephosphorylation. The sequence is that of Putative phosphoenolpyruvate synthase regulatory protein from Alkalilimnicola ehrlichii (strain ATCC BAA-1101 / DSM 17681 / MLHE-1).